A 259-amino-acid chain; its full sequence is 1,2-dihydroxy-1,2-dihydronaphthalene dehydrogenase (259 aa).

8–32 (SITGAGSGIGLELVRSFKSAGYYVS) contacts NAD(+). Serine 140 serves as a coordination point for substrate. Catalysis depends on tyrosine 153, which acts as the Proton acceptor.

Belongs to the short-chain dehydrogenases/reductases (SDR) family.

The enzyme catalyses (1R,2S)-1,2-dihydronaphthalene-1,2-diol + NAD(+) = naphthalene-1,2-diol + NADH + H(+). It catalyses the reaction cis-1,2-dihydroxy-1,2-dihydrodibenzothiophene + NAD(+) = 1,2-dihydroxydibenzothiophene + NADH + H(+). The protein operates within aromatic compound metabolism; naphthalene degradation. In terms of biological role, catalyzes the oxidation of naphthalene dihydrodiol into 1,2-dihydroxynaphthalene. This is 1,2-dihydroxy-1,2-dihydronaphthalene dehydrogenase (doxE) from Pseudomonas sp. (strain C18).